Here is a 40-residue protein sequence, read N- to C-terminus: Dolichyl-diphosphooligosaccharide--protein glycosyltransferase subunit 4 (40 aa).

At methionine 1 to aspartate 4 the chain is on the lumenal side. Residues valine 5–tyrosine 25 traverse the membrane as a helical segment. Over histidine 26–lysine 40 the chain is Cytoplasmic.

Belongs to the OST4 family. As to quaternary structure, component of the oligosaccharyltransferase (OST) complex.

The protein resides in the endoplasmic reticulum membrane. Functionally, subunit of the oligosaccharyl transferase (OST) complex that catalyzes the initial transfer of a defined glycan (Glc(3)Man(9)GlcNAc(2) in eukaryotes) from the lipid carrier dolichol-pyrophosphate to an asparagine residue within an Asn-X-Ser/Thr consensus motif in nascent polypeptide chains, the first step in protein N-glycosylation. N-glycosylation occurs cotranslationally and the complex associates with the Sec61 complex at the channel-forming translocon complex that mediates protein translocation across the endoplasmic reticulum (ER). All subunits are required for a maximal enzyme activity. This Drosophila virilis (Fruit fly) protein is Dolichyl-diphosphooligosaccharide--protein glycosyltransferase subunit 4.